Consider the following 224-residue polypeptide: Cytochrome c oxidase subunit 2 (224 aa).

Topologically, residues Met1 to His26 are mitochondrial intermembrane. Residues Ala27 to Asn48 traverse the membrane as a helical segment. At Thr49–Glu62 the chain is on the mitochondrial matrix side. The chain crosses the membrane as a helical span at residues Thr63–Arg82. Residues Leu83–Asn224 are Mitochondrial intermembrane-facing. Residues His161, Cys196, Glu198, Cys200, His204, and Met207 each contribute to the Cu cation site. A Mg(2+)-binding site is contributed by Glu198.

It belongs to the cytochrome c oxidase subunit 2 family. As to quaternary structure, component of the cytochrome c oxidase (complex IV, CIV), a multisubunit enzyme composed of a catalytic core of 3 subunits and several supernumerary subunits. The complex exists as a monomer or a dimer and forms supercomplexes (SCs) in the inner mitochondrial membrane with ubiquinol-cytochrome c oxidoreductase (cytochrome b-c1 complex, complex III, CIII). Cu cation is required as a cofactor.

It localises to the mitochondrion inner membrane. The enzyme catalyses 4 Fe(II)-[cytochrome c] + O2 + 8 H(+)(in) = 4 Fe(III)-[cytochrome c] + 2 H2O + 4 H(+)(out). Component of the cytochrome c oxidase, the last enzyme in the mitochondrial electron transport chain which drives oxidative phosphorylation. The respiratory chain contains 3 multisubunit complexes succinate dehydrogenase (complex II, CII), ubiquinol-cytochrome c oxidoreductase (cytochrome b-c1 complex, complex III, CIII) and cytochrome c oxidase (complex IV, CIV), that cooperate to transfer electrons derived from NADH and succinate to molecular oxygen, creating an electrochemical gradient over the inner membrane that drives transmembrane transport and the ATP synthase. Cytochrome c oxidase is the component of the respiratory chain that catalyzes the reduction of oxygen to water. Electrons originating from reduced cytochrome c in the intermembrane space (IMS) are transferred via the dinuclear copper A center (CU(A)) of subunit 2 and heme A of subunit 1 to the active site in subunit 1, a binuclear center (BNC) formed by heme A3 and copper B (CU(B)). The BNC reduces molecular oxygen to 2 water molecules using 4 electrons from cytochrome c in the IMS and 4 protons from the mitochondrial matrix. This is Cytochrome c oxidase subunit 2 (COII) from Albinaria caerulea (Land snail).